Consider the following 395-residue polypeptide: Putative pyridoxal phosphate-dependent acyltransferase (395 aa).

110–111 provides a ligand contact to pyridoxal 5'-phosphate; it reads GF. Residue histidine 135 participates in substrate binding. Residues serine 185, 210–213, and 240–243 each bind pyridoxal 5'-phosphate; these read DDAH and TLSK. At lysine 243 the chain carries N6-(pyridoxal phosphate)lysine. Residue threonine 357 coordinates substrate.

It belongs to the class-II pyridoxal-phosphate-dependent aminotransferase family. As to quaternary structure, homodimer. Requires pyridoxal 5'-phosphate as cofactor.

The protein is Putative pyridoxal phosphate-dependent acyltransferase of Staphylococcus aureus (strain COL).